A 74-amino-acid chain; its full sequence is MSAEESEEGATPAEVIEVVGKTGMHGEAMQVKCRIQEGGNQGRIITRNVLGPVRVGDVIQLKETAREADSIGGQ.

It belongs to the eukaryotic ribosomal protein eS28 family.

The sequence is that of Small ribosomal subunit protein eS28 from Halobacterium salinarum (strain ATCC 29341 / DSM 671 / R1).